Here is a 298-residue protein sequence, read N- to C-terminus: MQHAETKKGVIYTAVSFIMWGLFPLYWKLLEQLPALDILAHRIIWSFVFMCIVLFFLRQWKIGWQELRSLKKNGGILSLFLASILISINWFVYIWAVNHGFLLEASLGYYINPLVSVLLGILFLKEKLNRLQLVAVSIAAAGVIISAFQYGSIPYVALLLAFSFGLYGLSKKRTSLPSAIGLTLETFMIMPIALGYLLFSGHVQPAGAESGGTWLLLFLAGVFTALPLLLFAEGAKRLPLYQVGILQYIAPTITLLIGLFVYHEPFSSSKAFTFSCIWAALLLFTFSQVKWKRASKSH.

9 consecutive transmembrane segments (helical) span residues 10–30, 36–56, 76–96, 101–121, 142–162, 179–199, 212–232, 243–263, and 271–291; these read VIYT…WKLL, LDIL…VLFF, ILSL…YIWA, FLLE…LLGI, GVII…LLAF, AIGL…YLLF, GTWL…LLFA, VGIL…FVYH, and AFTF…QVKW. 2 EamA domains span residues 17–148 and 162–286; these read FIMW…ISAF and FSFG…LFTF.

Belongs to the EamA transporter family.

The protein resides in the cell membrane. This is an uncharacterized protein from Bacillus subtilis (strain 168).